Reading from the N-terminus, the 205-residue chain is Holliday junction branch migration complex subunit RuvA (205 aa).

Positions 1-64 (MIGKLKGVID…EDMIRLYGFA (64 aa)) are domain I. The segment at 65–143 (NQLEREWFRL…AFAGDASGTI (79 aa)) is domain II. The flexible linker stretch occupies residues 144–152 (GLKQELGAG). Residues 153–205 (AAPAPVADAVSALSNLGYSRDQAANAVAAALKEAGENADSAKLIRLGLKELSR) form a domain III region.

It belongs to the RuvA family. Homotetramer. Forms an RuvA(8)-RuvB(12)-Holliday junction (HJ) complex. HJ DNA is sandwiched between 2 RuvA tetramers; dsDNA enters through RuvA and exits via RuvB. An RuvB hexamer assembles on each DNA strand where it exits the tetramer. Each RuvB hexamer is contacted by two RuvA subunits (via domain III) on 2 adjacent RuvB subunits; this complex drives branch migration. In the full resolvosome a probable DNA-RuvA(4)-RuvB(12)-RuvC(2) complex forms which resolves the HJ.

The protein resides in the cytoplasm. In terms of biological role, the RuvA-RuvB-RuvC complex processes Holliday junction (HJ) DNA during genetic recombination and DNA repair, while the RuvA-RuvB complex plays an important role in the rescue of blocked DNA replication forks via replication fork reversal (RFR). RuvA specifically binds to HJ cruciform DNA, conferring on it an open structure. The RuvB hexamer acts as an ATP-dependent pump, pulling dsDNA into and through the RuvAB complex. HJ branch migration allows RuvC to scan DNA until it finds its consensus sequence, where it cleaves and resolves the cruciform DNA. The sequence is that of Holliday junction branch migration complex subunit RuvA from Brucella anthropi (strain ATCC 49188 / DSM 6882 / CCUG 24695 / JCM 21032 / LMG 3331 / NBRC 15819 / NCTC 12168 / Alc 37) (Ochrobactrum anthropi).